A 212-amino-acid polypeptide reads, in one-letter code: Redox-sensing transcriptional repressor Rex (212 aa).

Residues 18 to 57 (LYYRFVNTLKSKGIDRVNSKAISEALNIESATIRRDFSYF) constitute a DNA-binding region (H-T-H motif). 92–97 (GVGNLG) is an NAD(+) binding site.

It belongs to the transcriptional regulatory Rex family. As to quaternary structure, homodimer.

The protein localises to the cytoplasm. Modulates transcription in response to changes in cellular NADH/NAD(+) redox state. The sequence is that of Redox-sensing transcriptional repressor Rex from Staphylococcus haemolyticus (strain JCSC1435).